Consider the following 685-residue polypeptide: Mitotic interactor and substrate of PLK1 (685 aa).

A Phosphoserine; by CDK1 modification is found at Ser78. 2 disordered regions span residues 155 to 181 and 207 to 253; these read SGTVATLQAAPDHGDPRTPGPPRSTPL and NKEV…QGKG. Thr172 is subject to Phosphothreonine; by CDK1. Phosphothreonine is present on Thr179. Ser214 is subject to Phosphoserine; by CDK1. A Phosphothreonine modification is found at Thr219. Residue Ser284 is modified to Phosphoserine; by CDK1. The residue at position 287 (Thr287) is a Phosphothreonine; by CDK1. The segment at 345–499 is disordered; it reads GRPSLYVQRD…PWKLPRGSPQ (155 aa). Ser348 carries the post-translational modification Phosphoserine. Positions 355 to 371 are enriched in basic and acidic residues; sequence MVQETQREEDHRREGLH. Phosphothreonine; by CDK1 is present on Thr377. A Phosphoserine modification is found at Ser382. Residues 392-417 are compositionally biased toward low complexity; it reads ALSSDSILSPDSILSPAPDARAADPA. Ser394, Ser395, and Ser397 each carry phosphoserine; by PLK1. 2 positions are modified to phosphoserine: Ser406 and Ser436. Polar residues predominate over residues 454-469; the sequence is SGLSTVDTEAATSPKA. A Phosphoserine; by PLK1 modification is found at Ser477. Positions 478-488 are enriched in polar residues; that stretch reads ESSGKPMSTKQ. Phosphoserine occurs at positions 547 and 549. Residues 551 to 575 are a coiled coil; it reads DLLERERESVLRREREVAEERRNAL. 2 disordered regions span residues 575–607 and 629–651; these read LFPEVFSPTPDESCDQNSRSSSQASGITGSYSV and PVDSAPPGQRKKEQWYAGINPSD. Ser581 is subject to Phosphoserine; by PLK1. Position 583 is a phosphothreonine (Thr583). Residues 589–607 show a composition bias toward polar residues; that stretch reads DQNSRSSSQASGITGSYSV. Ser592 is modified (phosphoserine; by PLK1). At Ser681 the chain carries Phosphoserine.

The protein belongs to the MISP family. In terms of assembly, associates with F-actin. Interacts with DCTN1; this interaction regulates DCTN1 distribution at the cell cortex. Interacts with PTK2/FAK and MAPRE1. Phosphorylated by CDK1 and PLK1. CDK1 is the priming kinase for PLK1 phosphorylation. Phosphorylation by PLK1 is required for proper spindle orientation at metaphase.

It localises to the cell junction. It is found in the focal adhesion. The protein resides in the cytoplasm. Its subcellular location is the cytoskeleton. The protein localises to the cell cortex. Its function is as follows. Plays a role in mitotic spindle orientation and mitotic progression. Regulates the distribution of dynactin at the cell cortex in a PLK1-dependent manner, thus stabilizing cortical and astral microtubule attachments required for proper mitotic spindle positioning. May link microtubules to the actin cytospkeleton and focal adhesions. May be required for directed cell migration and centrosome orientation. May also be necessary for proper stacking of the Golgi apparatus. This Pongo abelii (Sumatran orangutan) protein is Mitotic interactor and substrate of PLK1.